The chain runs to 729 residues: MSVAYNPQTKQFHLRAGKASYVMQLFRSGYLAHVYWGKAVRDVRGARAFPRLDRAFSPNPDPSDRTFSLDTLLQEYPAYGNTDFRAPAYQVQLENGSTVTDLRYKTHRIYKGKPRLNGLPATYVEHEQEAETLEIVLGDALIGLEVTLQYTAYEKWNVITRSARFENKGGERLKLLRALSMSVDFPTADYDWIHLPGAWGRERWIERRPLVTGVQAAESRRGASSHQQNPFIALVAKNADEHQGEVYGFSFVYSGNFLAQIEVDQFGTARVSMGINPFDFTWLLQPGESFQTPEVVMVYSDQGLNGMSQTYHELYRTRLARGAFRDRERPILINNWEATYFDFNEEKIVNIARTAAELGIELVVLDDGWFGERDDDRRSLGDWIVNRRKLPNGLDGLAKQVNELGLQFGLWVEPEMVSPNSELYRKHPDWCLHVPNRPRSEGRNQLVLDYSREDVCDYIIETISNVLASAPITYVKWDMNRHMTEIGSSALPPERQRETAHRYMLGLYRVMDEITSRFPHILFESCSGGGGRFDPGMLYYMPQTWTSDNTDAVSRLKIQYGTSLVYPISAMGAHVSAVPNHQVGRVASLKTRGHVAMSGNFGYELDITKLTETEKQMMKQQVAFYKDVRRLVQFGTFYRLLSPFEGNEAAWMFVSADRSEALVAYFRVLAEANAPLSYLRLKGLDSNQDYEIEGLGVYGGDELMYAGVALPYRSSDFISMMWRLKAVQQ.

Residues Asp-53, Trp-199, 366-367 (DD), Arg-443, 476-480 (KWDMN), Cys-526, and Asp-548 each bind substrate. Asp-478 functions as the Nucleophile in the catalytic mechanism. Residue Asp-548 is the Proton donor of the active site.

It belongs to the glycosyl hydrolase 36 family. As to quaternary structure, homotetramer.

It catalyses the reaction Hydrolysis of terminal, non-reducing alpha-D-galactose residues in alpha-D-galactosides, including galactose oligosaccharides, galactomannans and galactolipids.. With respect to regulation, not inhibited by D-galactose or sucrose. Inhibited by pharmaceutical drug 1-deoxygalactonojirimycin. Its function is as follows. Hydrolyzes the short-chain alpha-galactosaccharides raffinose and stachyose. This Geobacillus stearothermophilus (Bacillus stearothermophilus) protein is Alpha-galactosidase AgaA.